The following is a 448-amino-acid chain: Probable D-serine dehydratase (448 aa).

Lysine 119 carries the N6-(pyridoxal phosphate)lysine modification.

This sequence belongs to the serine/threonine dehydratase family. DsdA subfamily. Pyridoxal 5'-phosphate is required as a cofactor.

It catalyses the reaction D-serine = pyruvate + NH4(+). The polypeptide is Probable D-serine dehydratase (Pseudomonas aeruginosa (strain UCBPP-PA14)).